The following is a 234-amino-acid chain: Small ribosomal subunit protein uS2 (234 aa).

The protein belongs to the universal ribosomal protein uS2 family.

This chain is Small ribosomal subunit protein uS2, found in Prochlorococcus marinus (strain AS9601).